We begin with the raw amino-acid sequence, 138 residues long: Large ribosomal subunit protein uL16c (138 aa).

The segment at 1–21 (MLSPQKTKFRKQHRGRMKGVS) is disordered. A compositionally biased stretch (basic residues) spans 7-21 (TKFRKQHRGRMKGVS).

Belongs to the universal ribosomal protein uL16 family. In terms of assembly, part of the 50S ribosomal subunit.

The protein localises to the plastid. It is found in the chloroplast. This chain is Large ribosomal subunit protein uL16c, found in Cycas taitungensis (Prince sago).